Consider the following 539-residue polypeptide: CTP synthase (539 aa).

The amidoligase domain stretch occupies residues 1 to 267 (MTKYIFVTGG…DQKVVDFLHI (267 aa)). Residue serine 13 coordinates CTP. Serine 13 is a binding site for UTP. 14-19 (SLGKGI) is a binding site for ATP. An L-glutamine-binding site is contributed by tyrosine 54. Aspartate 71 is an ATP binding site. The Mg(2+) site is built by aspartate 71 and glutamate 141. CTP-binding positions include 148 to 150 (DME), 188 to 193 (KSKPTQ), and lysine 224. UTP-binding positions include 188-193 (KSKPTQ) and lysine 224. Residues 294-537 (KITLVGKYVE…IGAASGLQVD (244 aa)) form the Glutamine amidotransferase type-1 domain. Glycine 356 is a binding site for L-glutamine. The active-site Nucleophile; for glutamine hydrolysis is cysteine 383. Residues 384-387 (LGMQ), glutamate 407, and arginine 465 each bind L-glutamine. Catalysis depends on residues histidine 510 and glutamate 512.

This sequence belongs to the CTP synthase family. As to quaternary structure, homotetramer.

The catalysed reaction is UTP + L-glutamine + ATP + H2O = CTP + L-glutamate + ADP + phosphate + 2 H(+). It carries out the reaction L-glutamine + H2O = L-glutamate + NH4(+). The enzyme catalyses UTP + NH4(+) + ATP = CTP + ADP + phosphate + 2 H(+). Its pathway is pyrimidine metabolism; CTP biosynthesis via de novo pathway; CTP from UDP: step 2/2. Allosterically activated by GTP, when glutamine is the substrate; GTP has no effect on the reaction when ammonia is the substrate. The allosteric effector GTP functions by stabilizing the protein conformation that binds the tetrahedral intermediate(s) formed during glutamine hydrolysis. Inhibited by the product CTP, via allosteric rather than competitive inhibition. Functionally, catalyzes the ATP-dependent amination of UTP to CTP with either L-glutamine or ammonia as the source of nitrogen. Regulates intracellular CTP levels through interactions with the four ribonucleotide triphosphates. The chain is CTP synthase from Lactobacillus delbrueckii subsp. bulgaricus (strain ATCC 11842 / DSM 20081 / BCRC 10696 / JCM 1002 / NBRC 13953 / NCIMB 11778 / NCTC 12712 / WDCM 00102 / Lb 14).